A 145-amino-acid polypeptide reads, in one-letter code: Large-conductance mechanosensitive channel (145 aa).

Transmembrane regions (helical) follow at residues 14-34 (VIDLAVGIIIGAAFTAIVNSL) and 83-103 (GAFLSAVINFLIIAWAVFLLV).

It belongs to the MscL family. As to quaternary structure, homopentamer.

The protein resides in the cell inner membrane. Its function is as follows. Channel that opens in response to stretch forces in the membrane lipid bilayer. May participate in the regulation of osmotic pressure changes within the cell. The chain is Large-conductance mechanosensitive channel from Paracoccus denitrificans (strain Pd 1222).